The following is a 501-amino-acid chain: ATP synthase subunit alpha (501 aa).

An ATP-binding site is contributed by 169–176 (GDRQTGKT).

Belongs to the ATPase alpha/beta chains family. In terms of assembly, F-type ATPases have 2 components, CF(1) - the catalytic core - and CF(0) - the membrane proton channel. CF(1) has five subunits: alpha(3), beta(3), gamma(1), delta(1), epsilon(1). CF(0) has three main subunits: a(1), b(2) and c(9-12). The alpha and beta chains form an alternating ring which encloses part of the gamma chain. CF(1) is attached to CF(0) by a central stalk formed by the gamma and epsilon chains, while a peripheral stalk is formed by the delta and b chains.

The protein resides in the cell membrane. The enzyme catalyses ATP + H2O + 4 H(+)(in) = ADP + phosphate + 5 H(+)(out). In terms of biological role, produces ATP from ADP in the presence of a proton gradient across the membrane. The alpha chain is a regulatory subunit. In Streptococcus agalactiae serotype Ia (strain ATCC 27591 / A909 / CDC SS700), this protein is ATP synthase subunit alpha.